We begin with the raw amino-acid sequence, 80 residues long: Exodeoxyribonuclease 7 small subunit (80 aa).

It belongs to the XseB family. Heterooligomer composed of large and small subunits.

It localises to the cytoplasm. The catalysed reaction is Exonucleolytic cleavage in either 5'- to 3'- or 3'- to 5'-direction to yield nucleoside 5'-phosphates.. In terms of biological role, bidirectionally degrades single-stranded DNA into large acid-insoluble oligonucleotides, which are then degraded further into small acid-soluble oligonucleotides. This is Exodeoxyribonuclease 7 small subunit from Escherichia coli O139:H28 (strain E24377A / ETEC).